The primary structure comprises 567 residues: Type II secretion system protein E (567 aa).

325 to 332 (GPTGSGKT) is an ATP binding site.

Belongs to the GSP E family. As to quaternary structure, forms homooligomers; most probably hexamers. Interacts with XpsL/GspL.

The protein resides in the cell inner membrane. It carries out the reaction ATP + H2O + cellular proteinSide 1 = ADP + phosphate + cellular proteinSide 2.. Its function is as follows. ATPase component of the type II secretion system required for the energy-dependent secretion of extracellular factors such as proteases and toxins from the periplasm. Acts as a molecular motor to provide the energy that is required for assembly of the pseudopilus and the extrusion of substrates generated in the cytoplasm. This chain is Type II secretion system protein E (xpsE), found in Xanthomonas campestris pv. campestris (strain ATCC 33913 / DSM 3586 / NCPPB 528 / LMG 568 / P 25).